Reading from the N-terminus, the 142-residue chain is Large ribosomal subunit protein uL11 (142 aa).

Belongs to the universal ribosomal protein uL11 family. In terms of assembly, part of the ribosomal stalk of the 50S ribosomal subunit. Interacts with L10 and the large rRNA to form the base of the stalk. L10 forms an elongated spine to which L12 dimers bind in a sequential fashion forming a multimeric L10(L12)X complex. One or more lysine residues are methylated.

Forms part of the ribosomal stalk which helps the ribosome interact with GTP-bound translation factors. In Dichelobacter nodosus (strain VCS1703A), this protein is Large ribosomal subunit protein uL11.